The primary structure comprises 920 residues: Isoleucine--tRNA ligase (920 aa).

Residues 58-68 (PYANGHLHLGH) carry the 'HIGH' region motif. Glu-569 serves as a coordination point for L-isoleucyl-5'-AMP. Residues 610–614 (KMSKS) carry the 'KMSKS' region motif. Residue Lys-613 participates in ATP binding. Zn(2+)-binding residues include Cys-895, Cys-898, Cys-910, and Cys-913.

The protein belongs to the class-I aminoacyl-tRNA synthetase family. IleS type 1 subfamily. Monomer. Requires Zn(2+) as cofactor.

The protein localises to the cytoplasm. It catalyses the reaction tRNA(Ile) + L-isoleucine + ATP = L-isoleucyl-tRNA(Ile) + AMP + diphosphate. Functionally, catalyzes the attachment of isoleucine to tRNA(Ile). As IleRS can inadvertently accommodate and process structurally similar amino acids such as valine, to avoid such errors it has two additional distinct tRNA(Ile)-dependent editing activities. One activity is designated as 'pretransfer' editing and involves the hydrolysis of activated Val-AMP. The other activity is designated 'posttransfer' editing and involves deacylation of mischarged Val-tRNA(Ile). The polypeptide is Isoleucine--tRNA ligase (Helicobacter pylori (strain ATCC 700392 / 26695) (Campylobacter pylori)).